A 318-amino-acid polypeptide reads, in one-letter code: Endochitinase 3 (318 aa).

An N-terminal signal peptide occupies residues 1 to 18 (EFTIFSLLFSLLLLNASA). One can recognise a Chitin-binding type-1 domain in the interval 19–60 (EQCGSQAGGALCAPGLCCSKFGWCGNTNDYCGPGNCQSQCPG). 7 disulfide bridges follow: C21-C36, C30-C42, C35-C49, C54-C58, C89-C152, C164-C172, and C271-C303. E134 (proton donor) is an active-site residue. A propeptide spans 312–318 (GLLVDTV) (removed in mature form, vacuolar targeting).

Belongs to the glycosyl hydrolase 19 family. Chitinase class I subfamily.

It is found in the vacuole. The enzyme catalyses Random endo-hydrolysis of N-acetyl-beta-D-glucosaminide (1-&gt;4)-beta-linkages in chitin and chitodextrins.. Its function is as follows. Defense against chitin-containing fungal pathogens. This Solanum tuberosum (Potato) protein is Endochitinase 3 (CHTB3).